The primary structure comprises 491 residues: Chromosomal replication initiator protein DnaA (491 aa).

A domain I, interacts with DnaA modulators region spans residues 1 to 69 (MTTWDKCLKK…TIQECHGNDL (69 aa)). The segment at 69–154 (LIIEYSNKKF…KEDEEYSFGL (86 aa)) is domain II. The segment at 155 to 371 (PLKEKYVFDS…GALNRVLTTS (217 aa)) is domain III, AAA+ region. Residues glycine 199, glycine 201, lysine 202, and threonine 203 each coordinate ATP. The tract at residues 372–491 (KFNHKDPTIE…YELLLDKISR (120 aa)) is domain IV, binds dsDNA.

The protein belongs to the DnaA family. As to quaternary structure, oligomerizes as a right-handed, spiral filament on DNA at oriC.

It is found in the cytoplasm. Functionally, plays an essential role in the initiation and regulation of chromosomal replication. ATP-DnaA binds to the origin of replication (oriC) to initiate formation of the DNA replication initiation complex once per cell cycle. Binds the DnaA box (a 9 base pair repeat at the origin) and separates the double-stranded (ds)DNA. Forms a right-handed helical filament on oriC DNA; dsDNA binds to the exterior of the filament while single-stranded (ss)DNA is stabiized in the filament's interior. The ATP-DnaA-oriC complex binds and stabilizes one strand of the AT-rich DNA unwinding element (DUE), permitting loading of DNA polymerase. After initiation quickly degrades to an ADP-DnaA complex that is not apt for DNA replication. Binds acidic phospholipids. This chain is Chromosomal replication initiator protein DnaA, found in Francisella tularensis subsp. novicida (strain U112).